A 587-amino-acid polypeptide reads, in one-letter code: MDPSGSDEDADADFDTQVIIQQSLLDVYKPGIAQHTPEAARLHSFPSDDYKKIAEAIETGKEDALAGFAKYHPAFDEANGNGWLPLHKAAVQLNKNILEITMNASEPSTWERTTHNGETALFLAVSSSLLENAHFLLLKGCNPNAKTSEGNSPLLTAVLKDAYDMATLLISHGADVNLRCANERTALHEAAKLGRLDMVKLMLASGAYPDARSSYGFTPLALAAQGGHTGIMQLLLQKGADVHSQASDSSSVLLEAVRGGNPEAVSLLLEYGADANIPKSSGHLPIHVAADKGHFLALKVLVPVTDIAAIKKSGISPVHCAAAGAHPHCLELLIQAGFDVNFMLDQRIRKHYDDQRKSALYFAVSNGDLPSVKLLLSAGALPNQDPVNCLQIALRMGNYELISLLLRHGANVNYFCRVNPLHFPSALQYTLKDEVMLRMLLNYGYDTERCFDCPHGERVHRFCTFEGWTSTVIKDTMFCEVITLSWLQHLSGKVVRVMLDYVDQVQICSKLKAVLEKQRLWPEIHFILANPRSLQHLCRLKIRKCMGRLRLRCPVFMSFLPLPNLLKAYVLYKEYDLFGQERSTGTW.

ANK repeat units follow at residues 81–110, 116–145, 149–178, 182–211, 215–244, 248–277, 281–310, 313–342, 355–384, 385–414, and 416–449; these read NGWL…PSTW, NGET…NPNA, EGNS…DVNL, NERT…YPDA, YGFT…DVHS, DSSS…DANI, SGHL…IAAI, SGIS…DVNF, QRKS…LPNQ, DPVN…NVNY, and CRVN…DTER. Positions 521 to 576 constitute an SOCS box domain; the sequence is WPEIHFILANPRSLQHLCRLKIRKCMGRLRLRCPVFMSFLPLPNLLKAYVLYKEYD.

This sequence belongs to the ankyrin SOCS box (ASB) family. As to quaternary structure, interacts with MAPRE2; this interaction promotes MAPRE2 degradation.

The protein operates within protein modification; protein ubiquitination. Its function is as follows. May be a substrate-recognition component of a SCF-like ECS (Elongin-Cullin-SOCS-box protein) E3 ubiquitin-protein ligase complex which mediates the ubiquitination and subsequent proteasomal degradation of target proteins. Plays a role in the inhibition of cardiomyocyte nuclear proliferation by mediating the ubiquitination and degradation of MAPRE2. The sequence is that of Ankyrin repeat and SOCS box protein 14 (Asb14) from Mus musculus (Mouse).